Here is a 697-residue protein sequence, read N- to C-terminus: Mediator of RNA polymerase II transcription subunit 16 (697 aa).

WD repeat units follow at residues 68 to 107 (GHQE…ANSW), 199 to 241 (RCRV…VSEK), 264 to 308 (DKFP…LPLN), and 622 to 663 (NQGS…CLPV).

Belongs to the Mediator complex subunit 16 family. As to quaternary structure, component of the Mediator complex.

The protein resides in the nucleus. Component of the Mediator complex, a coactivator involved in the regulated transcription of nearly all RNA polymerase II-dependent genes. Mediator functions as a bridge to convey information from gene-specific regulatory proteins to the basal RNA polymerase II transcription machinery. Mediator is recruited to promoters by direct interactions with regulatory proteins and serves as a scaffold for the assembly of a functional preinitiation complex with RNA polymerase II and the general transcription factors. The protein is Mediator of RNA polymerase II transcription subunit 16 (med16) of Xenopus laevis (African clawed frog).